The following is a 426-amino-acid chain: MSKSEQLFEKAQKVIPGGVNSPVRAFKGVGGTPVFIQKAEGAYITDSDGKKYIDYVGSWGPMVLGHNHPAIIDAVLKAVPNGLSFGAPTESEITLAELVTKLVPSIELVRMVSSGTEATMSAIRLARGYTGRDKIIKFEGCYHGHSDSLLVKAGSGALTLGQPSGPGVPADFAKHTLTCTYNDLDSVKTAFEQYPNEIACLIVEPVAGNMNCIPPKNDFLKGLRALCDQYGAVFIIDEVMTGFRVALGGAQAYYDVKPDLTTLGKIIGGGMPVGAFGGKKEIMEYIAPTGPVYQAGTLSGNPIAMAAGLACLTELSKAGNEEKLAAQTKTLAEGFKALADKHNVPFTAQYVGGMFGLFFTEQAEITNFQEVMKCDAAKFNRFFHLMLEQGVYLAPSAFEAGFMSLAHSDEDIQATLAAADKAFAQL.

N6-(pyridoxal phosphate)lysine is present on Lys265.

It belongs to the class-III pyridoxal-phosphate-dependent aminotransferase family. HemL subfamily. As to quaternary structure, homodimer. The cofactor is pyridoxal 5'-phosphate.

The protein resides in the cytoplasm. It carries out the reaction (S)-4-amino-5-oxopentanoate = 5-aminolevulinate. It participates in porphyrin-containing compound metabolism; protoporphyrin-IX biosynthesis; 5-aminolevulinate from L-glutamyl-tRNA(Glu): step 2/2. This Actinobacillus pleuropneumoniae serotype 3 (strain JL03) protein is Glutamate-1-semialdehyde 2,1-aminomutase.